Reading from the N-terminus, the 102-residue chain is MGKTGNIEHVEERVESELMPPSMYKVILNNDDYTPMDFVIEVLQVFFRKNEQEATDIMLTIHHQGKGICGIFPFGIAETKVIQVNQFARQNQHPLLCSLEKA.

It belongs to the ClpS family. In terms of assembly, binds to the N-terminal domain of the chaperone ClpA.

Functionally, involved in the modulation of the specificity of the ClpAP-mediated ATP-dependent protein degradation. The protein is ATP-dependent Clp protease adapter protein ClpS of Shewanella putrefaciens (strain CN-32 / ATCC BAA-453).